The sequence spans 31 residues: AATAATAATAATAATAATAATAATAATAATA.

10 O-linked (GalNAc...) threonine glycosylation sites follow: threonine 3, threonine 6, threonine 9, threonine 12, threonine 15, threonine 18, threonine 21, threonine 24, threonine 27, and threonine 30.

In terms of processing, O-linked glycans consist of Gal-GalNAc disaccharides. The three proteins may differ only in the number of repeating units of -Ala-Ala-Thr-.

The protein localises to the secreted. Antifreeze proteins lower the blood freezing point. This fish lives in antarctic waters where it experiences water temperatures near -1.9 degrees Celsius. Its blood has a freezing point of about -2.0 degrees Celsius, and 30% of the freezing-point depression is due mainly to the 3 major high molecular weight glycoproteins in the plasma. This chain is Ice-structuring glycoprotein 3, found in Pagothenia borchgrevinki (Bald rockcod).